The chain runs to 203 residues: uncharacterized protein (203 aa).

The helical transmembrane segment at 9–29 (LVVLFTIVTFGLVSPPAALMA) threads the bilayer.

Its subcellular location is the membrane. This is an uncharacterized protein from Bacillus subtilis (strain 168).